An 825-amino-acid polypeptide reads, in one-letter code: IQ and AAA domain-containing protein 1-like (825 aa).

In terms of domain architecture, IQ spans 206–235 (RDQGAIVIQKVWKGYLQRKRIEQDRRVEME). Basic and acidic residues predominate over residues 344 to 366 (QAQESRKKDQEKKEKNKEKEKEK). Disordered stretches follow at residues 344–378 (QAQESRKKDQEKKEKNKEKEKEKKEKKKKKVKEEK) and 459–487 (DREETRPLKSPKKKGGKKSGKKKKEKDLT). A compositionally biased stretch (basic residues) spans 467–482 (KSPKKKGGKKSGKKKK). An ATP-binding site is contributed by 572 to 579 (GPSGMGKK).

It belongs to the AAA ATPase family.

This Mus musculus (Mouse) protein is IQ and AAA domain-containing protein 1-like (Iqca1l).